We begin with the raw amino-acid sequence, 79 residues long: D-alanyl carrier protein (79 aa).

In terms of domain architecture, Carrier spans 1-77 (MSTKETVIDL…KIIQGIEELQ (77 aa)). Position 35 is an O-(pantetheine 4'-phosphoryl)serine (S35).

This sequence belongs to the DltC family. Post-translationally, 4'-phosphopantetheine is transferred from CoA to a specific serine of apo-DCP.

It is found in the cytoplasm. Its pathway is cell wall biogenesis; lipoteichoic acid biosynthesis. Functionally, carrier protein involved in the D-alanylation of lipoteichoic acid (LTA). The loading of thioester-linked D-alanine onto DltC is catalyzed by D-alanine--D-alanyl carrier protein ligase DltA. The DltC-carried D-alanyl group is further transferred to cell membrane phosphatidylglycerol (PG) by forming an ester bond, probably catalyzed by DltD. D-alanylation of LTA plays an important role in modulating the properties of the cell wall in Gram-positive bacteria, influencing the net charge of the cell wall. The sequence is that of D-alanyl carrier protein from Streptococcus equi subsp. equi (strain 4047).